The chain runs to 121 residues: DNA-directed RNA polymerase subunit omega (121 aa).

This sequence belongs to the RNA polymerase subunit omega family. In terms of assembly, the RNAP catalytic core consists of 2 alpha, 1 beta, 1 beta' and 1 omega subunit. When a sigma factor is associated with the core the holoenzyme is formed, which can initiate transcription.

The enzyme catalyses RNA(n) + a ribonucleoside 5'-triphosphate = RNA(n+1) + diphosphate. In terms of biological role, promotes RNA polymerase assembly. Latches the N- and C-terminal regions of the beta' subunit thereby facilitating its interaction with the beta and alpha subunits. The protein is DNA-directed RNA polymerase subunit omega of Syntrophobacter fumaroxidans (strain DSM 10017 / MPOB).